Reading from the N-terminus, the 137-residue chain is Large ribosomal subunit protein uL16 (137 aa).

This sequence belongs to the universal ribosomal protein uL16 family. In terms of assembly, part of the 50S ribosomal subunit.

Binds 23S rRNA and is also seen to make contacts with the A and possibly P site tRNAs. This Nitratidesulfovibrio vulgaris (strain DSM 19637 / Miyazaki F) (Desulfovibrio vulgaris) protein is Large ribosomal subunit protein uL16.